Here is a 360-residue protein sequence, read N- to C-terminus: Phospho-N-acetylmuramoyl-pentapeptide-transferase (360 aa).

10 helical membrane passes run 27-47 (IVSL…LIAW), 72-92 (PTMG…MWAY), 94-114 (SNPY…VGFI), 132-152 (WKYF…YSIG), 168-188 (IMPQ…VGTS), 199-219 (GLAI…AWAT), 236-256 (AGEL…FLWF), 263-283 (VFMG…IAVL), 288-308 (FLLV…ILQV), and 338-358 (VIVR…ATLK).

This sequence belongs to the glycosyltransferase 4 family. MraY subfamily. The cofactor is Mg(2+).

The protein localises to the cell inner membrane. It carries out the reaction UDP-N-acetyl-alpha-D-muramoyl-L-alanyl-gamma-D-glutamyl-meso-2,6-diaminopimeloyl-D-alanyl-D-alanine + di-trans,octa-cis-undecaprenyl phosphate = di-trans,octa-cis-undecaprenyl diphospho-N-acetyl-alpha-D-muramoyl-L-alanyl-D-glutamyl-meso-2,6-diaminopimeloyl-D-alanyl-D-alanine + UMP. The protein operates within cell wall biogenesis; peptidoglycan biosynthesis. In terms of biological role, catalyzes the initial step of the lipid cycle reactions in the biosynthesis of the cell wall peptidoglycan: transfers peptidoglycan precursor phospho-MurNAc-pentapeptide from UDP-MurNAc-pentapeptide onto the lipid carrier undecaprenyl phosphate, yielding undecaprenyl-pyrophosphoryl-MurNAc-pentapeptide, known as lipid I. This Yersinia pestis bv. Antiqua (strain Angola) protein is Phospho-N-acetylmuramoyl-pentapeptide-transferase.